The sequence spans 433 residues: 3-phosphoshikimate 1-carboxyvinyltransferase (433 aa).

Positions 22, 23, and 27 each coordinate 3-phosphoshikimate. Lys22 is a binding site for phosphoenolpyruvate. Gly94 and Arg122 together coordinate phosphoenolpyruvate. 3-phosphoshikimate-binding residues include Ser168, Ser169, Gln170, Ser196, Asp319, and Lys346. Phosphoenolpyruvate is bound at residue Gln170. Asp319 serves as the catalytic Proton acceptor. 3 residues coordinate phosphoenolpyruvate: Arg350, Arg394, and Lys418.

Belongs to the EPSP synthase family. As to quaternary structure, monomer.

Its subcellular location is the cytoplasm. It carries out the reaction 3-phosphoshikimate + phosphoenolpyruvate = 5-O-(1-carboxyvinyl)-3-phosphoshikimate + phosphate. The protein operates within metabolic intermediate biosynthesis; chorismate biosynthesis; chorismate from D-erythrose 4-phosphate and phosphoenolpyruvate: step 6/7. Its function is as follows. Catalyzes the transfer of the enolpyruvyl moiety of phosphoenolpyruvate (PEP) to the 5-hydroxyl of shikimate-3-phosphate (S3P) to produce enolpyruvyl shikimate-3-phosphate and inorganic phosphate. The polypeptide is 3-phosphoshikimate 1-carboxyvinyltransferase (Nitrosomonas eutropha (strain DSM 101675 / C91 / Nm57)).